The following is a 302-amino-acid chain: NAD kinase 2 (302 aa).

Asp-78 functions as the Proton acceptor in the catalytic mechanism. Residues 78–79 (DG), 152–153 (NE), Asp-182, and 193–198 (TAYSLS) contribute to the NAD(+) site.

This sequence belongs to the NAD kinase family. It depends on a divalent metal cation as a cofactor.

It localises to the cytoplasm. It carries out the reaction NAD(+) + ATP = ADP + NADP(+) + H(+). Functionally, involved in the regulation of the intracellular balance of NAD and NADP, and is a key enzyme in the biosynthesis of NADP. Catalyzes specifically the phosphorylation on 2'-hydroxyl of the adenosine moiety of NAD to yield NADP. In Prochlorococcus marinus (strain NATL2A), this protein is NAD kinase 2.